Here is a 301-residue protein sequence, read N- to C-terminus: UPF0282 protein Pcal_1546 (301 aa).

Belongs to the UPF0282 family.

The sequence is that of UPF0282 protein Pcal_1546 from Pyrobaculum calidifontis (strain DSM 21063 / JCM 11548 / VA1).